The following is a 94-amino-acid chain: Cystatin-A1 (94 aa).

The Secondary area of contact motif lies at 45 to 49; sequence QLVAG.

It belongs to the cystatin family.

The protein resides in the cytoplasm. Its function is as follows. Intracellular thiol proteinase inhibitor. Inhibits papain, but not cathepsin B. This Dictyostelium discoideum (Social amoeba) protein is Cystatin-A1 (cpiA).